We begin with the raw amino-acid sequence, 499 residues long: Protein-tyrosine sulfotransferase (499 aa).

Residues 1–9 (MRLPYRNKK) are Cytoplasmic-facing. The chain crosses the membrane as a helical; Signal-anchor for type II membrane protein span at residues 10–30 (VTLWVLFGIIVITMFLFKFTE). Over 31–499 (LRPTCLFKVD…NIMEDPMADT (469 aa)) the chain is Lumenal. 80-84 (RSGTT) is a binding site for 3'-phosphoadenylyl sulfate. Cysteine 98 and cysteine 158 are oxidised to a cystine. Glutamate 101 serves as the catalytic Proton donor/acceptor. The interval 103–107 (RVIPR) is interaction with peptide substrate. Residues arginine 185, serine 193, and arginine 197 each contribute to the 3'-phosphoadenylyl sulfate site. An intrachain disulfide couples cysteine 227 to cysteine 235. Residues tyrosine 240, 287–296 (SSDQVIKPVN), and lysine 302 contribute to the 3'-phosphoadenylyl sulfate site. Asparagine 346 and asparagine 380 each carry an N-linked (GlcNAc...) asparagine glycan. Disordered stretches follow at residues 362–460 (KQVL…QKPK) and 476–499 (NNIN…MADT). Low complexity-rich tracts occupy residues 375–400 (TNTI…IIPE) and 408–434 (HVQQ…QQQQ). The segment covering 443-460 (EREAEPDREQQLLHQKPK) has biased composition (basic and acidic residues). Residues 476–491 (NNINNNINNNNNNNNI) are compositionally biased toward low complexity.

It belongs to the protein sulfotransferase family.

Its subcellular location is the golgi apparatus membrane. It carries out the reaction L-tyrosyl-[protein] + 3'-phosphoadenylyl sulfate = O-sulfo-L-tyrosine-[protein] + adenosine 3',5'-bisphosphate + H(+). In terms of biological role, catalyzes the O-sulfation of tyrosine residues within acidic motifs of polypeptides. Has a role in protein secretion. This chain is Protein-tyrosine sulfotransferase, found in Drosophila melanogaster (Fruit fly).